Consider the following 932-residue polypeptide: Protocadherin gamma-A3 (932 aa).

The first 29 residues, 1-29 (MTNCLSFRNGRGLALLCALLGTLCETGSG), serve as a signal peptide directing secretion. Cadherin domains lie at 30–133 (QIRY…APNF), 134–242 (PTEE…PPMF), 243–347 (TQPE…APEI), 348–452 (TITS…PPTF), 453–562 (PHLS…APEI), and 570–682 (DGST…EPSA). At 30–692 (QIRYSVSEEL…KPNDSDLTLY (663 aa)) the chain is on the extracellular side. N-linked (GlcNAc...) asparagine glycans are attached at residues Asn265, Asn419, and Asn545. Asn685 carries an N-linked (GlcNAc...) asparagine glycan. Residues 693–713 (LVVAVAAVSCVFLALVIVLLA) form a helical membrane-spanning segment. Over 714-932 (HRLRRWHKSR…KKKSGKKEKK (219 aa)) the chain is Cytoplasmic. Disordered stretches follow at residues 806-841 (LLQQ…WPNN) and 902-932 (ATLT…KEKK). A compositionally biased stretch (basic residues) spans 922-932 (NKKKSGKKEKK).

It is found in the cell membrane. Potential calcium-dependent cell-adhesion protein. May be involved in the establishment and maintenance of specific neuronal connections in the brain. This is Protocadherin gamma-A3 (PCDHGA3) from Pan troglodytes (Chimpanzee).